A 92-amino-acid polypeptide reads, in one-letter code: Co-chaperonin GroES (92 aa).

Belongs to the GroES chaperonin family. Heptamer of 7 subunits arranged in a ring. Interacts with the chaperonin GroEL.

The protein resides in the cytoplasm. Functionally, together with the chaperonin GroEL, plays an essential role in assisting protein folding. The GroEL-GroES system forms a nano-cage that allows encapsulation of the non-native substrate proteins and provides a physical environment optimized to promote and accelerate protein folding. GroES binds to the apical surface of the GroEL ring, thereby capping the opening of the GroEL channel. The polypeptide is Co-chaperonin GroES (Methanosarcina mazei (strain ATCC BAA-159 / DSM 3647 / Goe1 / Go1 / JCM 11833 / OCM 88) (Methanosarcina frisia)).